The chain runs to 565 residues: NAD-dependent malic enzyme (565 aa).

The active-site Proton donor is tyrosine 104. Residue arginine 157 participates in NAD(+) binding. The Proton acceptor role is filled by lysine 175. A divalent metal cation-binding residues include glutamate 246, aspartate 247, and aspartate 270. NAD(+)-binding residues include aspartate 270 and asparagine 418.

This sequence belongs to the malic enzymes family. In terms of assembly, homotetramer. It depends on Mg(2+) as a cofactor. The cofactor is Mn(2+).

The catalysed reaction is (S)-malate + NAD(+) = pyruvate + CO2 + NADH. It catalyses the reaction oxaloacetate + H(+) = pyruvate + CO2. The chain is NAD-dependent malic enzyme from Enterobacter sp. (strain 638).